Consider the following 191-residue polypeptide: Protein DMP10 (191 aa).

The next 4 membrane-spanning stretches (helical) occupy residues 15-35 (FANL…PSFS), 48-68 (LLTI…SFTD), 114-134 (LSFV…ALAV), and 158-178 (LMIK…FAIF).

The protein belongs to the plant DMP1 protein family. In terms of tissue distribution, restricted to flowers.

It is found in the membrane. Involved in membrane remodeling. The chain is Protein DMP10 from Arabidopsis thaliana (Mouse-ear cress).